A 660-amino-acid polypeptide reads, in one-letter code: Epithelial sodium channel subunit gamma (660 aa).

At 1–55 (MSKSGKKLTQKLKKNLPVTGPQAPTLYELMQWYCLNTNTHGCRRIVVSKGRLRRW) the chain is on the cytoplasmic side. Residues 56-76 (IWISLTLCAVAVIFWQCALLL) traverse the membrane as a helical segment. At 77–537 (MSYYSVSASI…VTLLSNFGGQ (461 aa)) the chain is on the extracellular side. Cystine bridges form between Cys101–Cys286, Cys209–Cys217, Cys263–Cys270, Cys375–Cys460, Cys397–Cys456, Cys401–Cys452, Cys410–Cys437, and Cys412–Cys426. Residues 538–558 (LGLWMSCSMICVLEIIEVFFI) form a helical membrane-spanning segment. Residues 559–660 (DSFWVVLRQR…IDSDEDVERL (102 aa)) lie on the Cytoplasmic side of the membrane.

The protein belongs to the amiloride-sensitive sodium channel (TC 1.A.6) family. SCNN1G subfamily. Component of the heterotrimeric epithelial sodium channel (ENaC) composed of an alpha/SCNN1A, a beta/SCNN1B and a gamma/SCNN1G subunit.

Its subcellular location is the apical cell membrane. It catalyses the reaction Na(+)(in) = Na(+)(out). Originally identified and characterized by its inhibition by the diuretic drug amiloride. This is one of the three pore-forming subunits of the heterotrimeric epithelial sodium channel (ENaC), a critical regulator of sodium balance and fluid homeostasis. ENaC operates in epithelial tissues, where it mediates the electrodiffusion of sodium ions from extracellular fluid through the apical membrane of cells, with water following osmotically. The polypeptide is Epithelial sodium channel subunit gamma (scnn1g-a) (Xenopus laevis (African clawed frog)).